A 437-amino-acid polypeptide reads, in one-letter code: tRNA-2-methylthio-N(6)-dimethylallyladenosine synthase (437 aa).

The MTTase N-terminal domain maps to 1–115 (MKVYIETMGC…ISQVIHKEKA (115 aa)). The [4Fe-4S] cluster site is built by C10, C46, C78, C148, C152, and C155. Positions 134–367 (KKAQIRSLLN…QNRHKEILEE (234 aa)) constitute a Radical SAM core domain. Residues 370–436 (KLEVGKTHVV…KGRLMATTKG (67 aa)) form the TRAM domain.

This sequence belongs to the methylthiotransferase family. MiaB subfamily. In terms of assembly, monomer. Requires [4Fe-4S] cluster as cofactor.

It localises to the cytoplasm. The enzyme catalyses N(6)-dimethylallyladenosine(37) in tRNA + (sulfur carrier)-SH + AH2 + 2 S-adenosyl-L-methionine = 2-methylsulfanyl-N(6)-dimethylallyladenosine(37) in tRNA + (sulfur carrier)-H + 5'-deoxyadenosine + L-methionine + A + S-adenosyl-L-homocysteine + 2 H(+). Functionally, catalyzes the methylthiolation of N6-(dimethylallyl)adenosine (i(6)A), leading to the formation of 2-methylthio-N6-(dimethylallyl)adenosine (ms(2)i(6)A) at position 37 in tRNAs that read codons beginning with uridine. This is tRNA-2-methylthio-N(6)-dimethylallyladenosine synthase from Helicobacter pylori (strain J99 / ATCC 700824) (Campylobacter pylori J99).